A 212-amino-acid chain; its full sequence is Large ribosomal subunit protein uL1 (212 aa).

It belongs to the universal ribosomal protein uL1 family. Part of the 50S ribosomal subunit.

Functionally, binds directly to 23S rRNA. Probably involved in E site tRNA release. In terms of biological role, protein L1 is also a translational repressor protein, it controls the translation of its operon by binding to its mRNA. The polypeptide is Large ribosomal subunit protein uL1 (Methanosphaera stadtmanae (strain ATCC 43021 / DSM 3091 / JCM 11832 / MCB-3)).